The primary structure comprises 501 residues: Phytoene desaturase (lycopene-forming) (501 aa).

12 to 45 (IVIGAGFGGLALAIRLQSAGIATTLVEARDKPGG) contacts FAD.

This sequence belongs to the carotenoid/retinoid oxidoreductase family. FAD serves as cofactor.

The catalysed reaction is 15-cis-phytoene + 4 A = all-trans-lycopene + 4 AH2. The protein operates within carotenoid biosynthesis; astaxanthin biosynthesis. Its function is as follows. This enzyme converts phytoene into lycopene via the intermediaries of phytofluene, zeta-carotene and neurosporene by the introduction of four double bonds. The polypeptide is Phytoene desaturase (lycopene-forming) (crtI) (Paracoccus sp. (strain N81106 / MBIC 01143) (Agrobacterium aurantiacum)).